Here is a 1287-residue protein sequence, read N- to C-terminus: FYVE zinc finger domain protein UPA1 (1287 aa).

The tract at residues 1-298 is disordered; that stretch reads MTIPDPANII…SSTSLSAPAE (298 aa). Residues 86–99 show a composition bias toward low complexity; it reads DSSSFGSKPSSSAS. A compositionally biased stretch (polar residues) spans 115–136; that stretch reads WATSSTTSHPSKASQSTLSPNA. The short motif at 128–144 is the PAM2 element; that stretch reads SQSTLSPNASVFKPSRS. Basic and acidic residues-rich tracts occupy residues 177–187 and 201–211; these read RPDHAPLDHEQ and KVEEQRGDHSI. Residues 212–235 show a composition bias toward polar residues; the sequence is PHQNGLVSAQAQTASDAVSTSKYT. A PAM2L 1 motif is present at residues 239–253; it reads ADQEEDQDDFVYPGA. Positions 255 to 294 are enriched in polar residues; the sequence is SPSSGQAAVQDEQQAVTDSQTTKSLTKQESDPEASSTSLS. 4 ANK repeats span residues 366-395, 400-429, 433-463, and 468-497; these read NGLV…AIVE, EGET…DANA, DGWT…QIDV, and GAWT…ADPF. Disordered stretches follow at residues 582–630, 643–697, 934–960, and 977–1005; these read NGGK…VGLP, RVGP…ASAQ, REAA…YPNS, and TSGT…APSE. Residues 674–695 are compositionally biased toward polar residues; the sequence is STPTPESVLQARRGTSSVNGAS. The span at 938 to 955 shows a compositional bias: acidic residues; it reads GLDEDEDEDAADDDDDEF. The short motif at 941–960 is the PAM2L 2 element; the sequence is EDEDEDAADDDDDEFIYPNS. Residues 981 to 995 are compositionally biased toward low complexity; that stretch reads LSRPSLSQRQSSAAS. The FYVE-type zinc finger occupies 1055 to 1129; it reads DEEAKDCIGC…VCNGCHAELQ (75 aa). The Zn(2+) site is built by C1061, C1064, C1077, C1080, C1085, C1088, C1121, and C1124. Residues 1243–1283 form an RING-type; atypical zinc finger; that stretch reads CSICMEDFVANSTIARLPCLCYFHRGCIDSWFKRGRECPVH.

This sequence belongs to the UPA1 PAM2 domain-binding protein family. In terms of assembly, part of large ribonucleoprotein complexes (mRNPs) containing RNA-binding proteins RRM4 and PAB1, endosome-binding protein UPA1, core scaffold protein UPA2 and associated factor GRP1. Interacts (via PAM2 motif) with PAB1 (via PABC domain). Interacts (via PAM2L motifs) with RRM4.

Its subcellular location is the cytoplasm. It localises to the cytoskeleton. It is found in the endosome. Functionally, FYVE zinc finger domain protein that functions in endosomal targeting and transport of mRNAs, as well as associated ribosomes. The endosomal mRNA transport regulates polarity of the infectious hyphae by transporting a broad spectrum of cargo mRNAs from the nucleus to cell poles. Involved in chitinase CTS1 secretion. Dispensable for general endosomal functions but crucial for endosomal recruitment of RRM4. The sequence is that of FYVE zinc finger domain protein UPA1 from Mycosarcoma maydis (Corn smut fungus).